Consider the following 587-residue polypeptide: MSMVDEPLYPIAVLIDELKNDDIQRRLNSIKRLSIIARALGEERTRKELIPFLSENNDDDDEVLLAMAEELGGFILYVGGVEYAYVLLPPLETLSTVEETCVREKAVDSLCRIGAQMRESDLVEHFTPLAKRLSAGEWFTARVSACGIFHIAYPSAPDVLKTELRSIYGQLCQDDMPMVRRAAATNLGKFAATIESAHLKTDIMSMFEDLTQDDQDSVRLLAVEGCAALGKLLEPQDCVAHILPVIVNFSQDKSWRVRYMVANQLYELCEAVGPEPTRTDLVPAYARLLCDNEAEVRIAAAGKVTKFCRILNPELAIQHILPCVKELSSDSSQHVRSALASVIMGMAPVLGKDATIEHLLPIFLSLLKDEFPDVRLNIISKLDQVNQVIGIDLLSQSLLPAIVELAEDRHWRVRLAIIEYIPLLASQLGVGFFDEKLGALCMQWLQDKVHSIREAAANNLKRLAEEFGPEWAMQHIVPQVLEMINNPHYLYRMTILRAVSLLAPVMGSEITCSKLLPAVITASKDRVPNIKFNVAKMMQSLIPIVDQAVVENMIRPCLVELSEDPDVDVRYFANQALQSIDNVMMSS.

Residue S2 is modified to N-acetylserine. 14 HEAT repeats span residues S2–E42, R44–G80, V81–E119, D158–I194, A197–P235, Q236–P274, P276–P313, E314–K352, D353–I391, L393–V430, F432–P469, E470–S508, E509–Q547, and V549–S586.

The protein belongs to the phosphatase 2A regulatory subunit A family. In terms of assembly, PP2A consists of a common heterodimeric core enzyme, composed of a 36 kDa catalytic subunit (subunit C) and a 65 kDa constant regulatory subunit (subunit A), that associates with a variety of regulatory subunits such as subunits B (the R2/B/PR55/B55, R3/B''/PR72/PR130/PR59 and R5/B'/B56 families). Interacts with CHIP. Interacts with SRK2E/OST1. In terms of processing, ubiquitinated. CHIP-mediated ubiquitination enhances phosphatase activity after an abiotic stress such as low temperature or darkness. Expressed ubiquitously at stable levels. However, higher protein levels in roots and flowers (at protein level).

It is found in the cytoplasm. The protein resides in the cytosol. Its subcellular location is the nucleus. The A subunit of protein phosphatase 2A serves as a scaffolding molecule to coordinate the assembly of the catalytic subunit and a variable regulatory B subunit. Involved during developmental process such as seedling and floral developments. Seems to act as a negative regulator of PP2A catalytic activity. In Arabidopsis thaliana (Mouse-ear cress), this protein is Serine/threonine-protein phosphatase 2A 65 kDa regulatory subunit A gamma isoform (PP2AA3).